A 227-amino-acid polypeptide reads, in one-letter code: Putative methylase YubD (227 aa).

It belongs to the N(4)/N(6)-methyltransferase family.

Functionally, a putative beta subtype methylase whose recognition site is unknown. This Escherichia coli (strain K12) protein is Putative methylase YubD (yubD).